The primary structure comprises 500 residues: Probable malate:quinone oxidoreductase (500 aa).

It belongs to the MQO family. FAD is required as a cofactor.

It carries out the reaction (S)-malate + a quinone = a quinol + oxaloacetate. It participates in carbohydrate metabolism; tricarboxylic acid cycle; oxaloacetate from (S)-malate (quinone route): step 1/1. This Bacillus cereus (strain ATCC 10987 / NRS 248) protein is Probable malate:quinone oxidoreductase.